The following is a 239-amino-acid chain: Large ribosomal subunit protein uL1 (239 aa).

It belongs to the universal ribosomal protein uL1 family. As to quaternary structure, part of the 50S ribosomal subunit.

Functionally, binds directly to 23S rRNA. The L1 stalk is quite mobile in the ribosome, and is involved in E site tRNA release. Its function is as follows. Protein L1 is also a translational repressor protein, it controls the translation of the L11 operon by binding to its mRNA. In Rickettsia canadensis (strain McKiel), this protein is Large ribosomal subunit protein uL1.